Here is a 308-residue protein sequence, read N- to C-terminus: ADP-L-glycero-D-manno-heptose-6-epimerase (308 aa).

Residues 10–11, 31–32, lysine 38, lysine 53, 75–79, and asparagine 92 contribute to the NADP(+) site; these read MI, DN, and EGACS. Tyrosine 140 serves as the catalytic Proton acceptor. Position 144 (lysine 144) interacts with NADP(+). Substrate is bound at residue asparagine 169. NADP(+) is bound by residues valine 170 and lysine 178. Lysine 178 serves as the catalytic Proton acceptor. Residues serine 180, histidine 187, 201-204, arginine 209, and tyrosine 272 contribute to the substrate site; that span reads FEGS.

The protein belongs to the NAD(P)-dependent epimerase/dehydratase family. HldD subfamily. Homopentamer. NADP(+) serves as cofactor.

The enzyme catalyses ADP-D-glycero-beta-D-manno-heptose = ADP-L-glycero-beta-D-manno-heptose. Its pathway is nucleotide-sugar biosynthesis; ADP-L-glycero-beta-D-manno-heptose biosynthesis; ADP-L-glycero-beta-D-manno-heptose from D-glycero-beta-D-manno-heptose 7-phosphate: step 4/4. In terms of biological role, catalyzes the interconversion between ADP-D-glycero-beta-D-manno-heptose and ADP-L-glycero-beta-D-manno-heptose via an epimerization at carbon 6 of the heptose. This is ADP-L-glycero-D-manno-heptose-6-epimerase from Actinobacillus pleuropneumoniae serotype 5b (strain L20).